The sequence spans 381 residues: Lipid-A-disaccharide synthase (381 aa).

This sequence belongs to the LpxB family.

The catalysed reaction is a lipid X + a UDP-2-N,3-O-bis[(3R)-3-hydroxyacyl]-alpha-D-glucosamine = a lipid A disaccharide + UDP + H(+). It functions in the pathway bacterial outer membrane biogenesis; LPS lipid A biosynthesis. Functionally, condensation of UDP-2,3-diacylglucosamine and 2,3-diacylglucosamine-1-phosphate to form lipid A disaccharide, a precursor of lipid A, a phosphorylated glycolipid that anchors the lipopolysaccharide to the outer membrane of the cell. The polypeptide is Lipid-A-disaccharide synthase (Solibacter usitatus (strain Ellin6076)).